A 580-amino-acid polypeptide reads, in one-letter code: Negative elongation factor B (580 aa).

Residue lysine 519 is modified to N6-acetyllysine. The disordered stretch occupies residues 552 to 580 (DHRKPSPTQAAETPALDLPLPSVPAPATL). Serine 557 carries the post-translational modification Phosphoserine.

It belongs to the NELF-B family. In terms of assembly, the NELF complex is composed of NELFA, NELFB, NELFCD and NELFE; the N-terminus of NELFB binds to the NELFA:NELFCD subcomplex. Binds RNA which may help to stabilize the NELF complex on nucleic acid Interacts with the first BRCT repeat of BRCA1. Interacts with KIAA1191. Isoform 1 and isoform 2 interact with NELFA, NELFCD and NELFE. Isoform 1 is expressed in the kidney, liver, adipose and lung. Isoform 2 is widely expressed.

Its subcellular location is the nucleus. Essential component of the NELF complex, a complex that negatively regulates the elongation of transcription by RNA polymerase II (Pol II). The NELF complex, which acts via an association with the DSIF complex and causes transcriptional pausing, is counteracted by the P-TEFb kinase complex. May be able to induce chromatin unfolding. Essential for early embryogenesis; plays an important role in maintaining the undifferentiated state of embryonic stem cells (ESCs) by preventing unscheduled expression of developmental genes. Plays a key role in establishing the responsiveness of stem cells to developmental cues; facilitates plasticity and cell fate commitment in ESCs by establishing the appropriate expression level of signaling molecules. Supports the transcription of genes involved in energy metabolism in cardiomyocytes; facilitates the association of transcription initiation factors with the promoters of the metabolism-related genes. In Mus musculus (Mouse), this protein is Negative elongation factor B (Nelfb).